The following is a 541-amino-acid chain: EH domain-containing protein 4 (541 aa).

Met-1 is subject to N-acetylmethionine. Residues 58–289 enclose the Dynamin-type G domain; sequence FENKPMILLV…DLFRDIQSLP (232 aa). Positions 68–75 are G1 motif; that stretch reads GQYSTGKT. 68-75 lines the ATP pocket; it reads GQYSTGKT. Residues 94–95 are G2 motif; sequence EP. Residues 156 to 159 are G3 motif; sequence DSPG. Ser-162 carries the post-translational modification Phosphoserine. The segment at 222–225 is G4 motif; sequence NKAD. An ATP-binding site is contributed by Lys-223. A region of interest (G5 motif) is located at residue Val-246. Trp-261 is a binding site for ATP. The EH domain occupies 447–535; it reads DKPVYDELFY…PHLVPPSHRK (89 aa). Tyr-451 carries the phosphotyrosine modification. Position 459 is a phosphoserine (Ser-459). The 36-residue stretch at 479–514 folds into the EF-hand domain; it reads LPNSVLGKIWKLADCDCDGMLDEEEFALAKHLIKIK. 5 residues coordinate Ca(2+): Asp-492, Asp-494, Asp-496, Met-498, and Glu-503.

The protein belongs to the TRAFAC class dynamin-like GTPase superfamily. Dynamin/Fzo/YdjA family. EHD subfamily. Homooligomer, and heterooligomer with EHD1, EHD2 and EHD3. Forms a complex with EHD4 and MICALL1; the complex controls CDH5 trafficking and coordinates angiogenesis. As to expression, highly expressed in pancreas and heart.

The protein resides in the early endosome membrane. Its subcellular location is the recycling endosome membrane. It is found in the cell membrane. It localises to the cell junction. The protein localises to the adherens junction. Its function is as follows. ATP- and membrane-binding protein that probably controls membrane reorganization/tubulation upon ATP hydrolysis. Plays a role in early endosomal transport. During sprouting angiogenesis, in complex with PACSIN2 and MICALL1, forms recycling endosome-like tubular structure at asymmetric adherens junctions to control CDH5 trafficking. The protein is EH domain-containing protein 4 of Homo sapiens (Human).